The following is a 37-amino-acid chain: Calcitonin gene-related peptide 1 (37 aa).

Residues C2 and C7 are joined by a disulfide bond. Residue F37 is modified to Phenylalanine amide.

Belongs to the calcitonin family.

It localises to the secreted. Its function is as follows. CGRP1/CALCA is a peptide hormone that induces vasodilation mediated by the CALCRL-RAMP1 receptor complex. Dilates a variety of vessels including the coronary, cerebral and systemic vasculature. Its abundance in the CNS also points toward a neurotransmitter or neuromodulator role. It also elevates platelet cAMP. CGRP1 can also bind and activate CALCR-RAMP1 (AMYR1) receptor complex. The chain is Calcitonin gene-related peptide 1 (CALCA) from Ovis aries (Sheep).